Reading from the N-terminus, the 291-residue chain is MANKQIIDKNDDLQAHTDRNDKPIATIESNHKENKIPDSEKKIVYSTKNLDLWYGENHALKNINLDILENNVTAIIGPSGCGKSTYIKALNRMVELVPSVKTAGKILYRDKNIFDDKHSVEKLRTNVGMVFQQPNPFPKSIYDNITYGPKIHGIKNKKVLDEIVEKSLRGAAIWDELKDRLDTNAYSLSGGQQQRVCIARTLAIEPDVILMDEPTSALDPISTLKVEELVQELKEKYSIIIVTHNMQQAARVSDKTAFFLNGYVNEYDDTDKIFSNPSDKQTEDYISGRFG.

Residues 1–21 are disordered; that stretch reads MANKQIIDKNDDLQAHTDRND. An ABC transporter domain is found at 45–286; the sequence is YSTKNLDLWY…PSDKQTEDYI (242 aa). 77-84 serves as a coordination point for ATP; it reads GPSGCGKS.

Belongs to the ABC transporter superfamily. Phosphate importer (TC 3.A.1.7) family. As to quaternary structure, the complex is composed of two ATP-binding proteins (PstB), two transmembrane proteins (PstC and PstA) and a solute-binding protein (PstS).

It localises to the cell membrane. The catalysed reaction is phosphate(out) + ATP + H2O = ADP + 2 phosphate(in) + H(+). Part of the ABC transporter complex PstSACB involved in phosphate import. Responsible for energy coupling to the transport system. The chain is Phosphate import ATP-binding protein PstB from Staphylococcus saprophyticus subsp. saprophyticus (strain ATCC 15305 / DSM 20229 / NCIMB 8711 / NCTC 7292 / S-41).